Consider the following 419-residue polypeptide: MLSQFPGQCSNNVFCFPPIESETKNGKKASWIICVQVMQHNTILPITDEMFSTDVKDAVAEIFTKFFVEEGAVRISKTTRVTEGKNLGKKNATTVVHQAFKDALSKYNRHARQKRGAHTNRGMIPPMLVKYFNIIPKTFFEEETDPIVHGKRNGVRAVACQQGDGSILLYSRTEKEFLGLDNIKKELKQLYLFIDVRVYLDGELYLHRKPLQWIAGQANAKADSSELHFYVFDCFWSDQLQMPSNKRQQLLTNIFKQKEDLTFIHQVENFSVKNEDEALRLKTQFIKEGYEGAIVRNANGPYEPGYNNYHSPHLAKLKPLLDAEFILVDYTQGKKGKDLGAILWVCELPNKKRFVVTPKHLTYADRYALFQKLTPALFKKHLYGKELTVEYAELSPKTGIPLQARAVGFREPINVLEII.

The NTD stretch occupies residues 1 to 120 (MLSQFPGQCS…ARQKRGAHTN (120 aa)). The tract at residues 121 to 317 (RGMIPPMLVK…NYHSPHLAKL (197 aa)) is AD domain. ATP-binding residues include His149, Lys151, Glu203, and Phe232. The N6-AMP-lysine intermediate role is filled by Lys151. Residue Glu203 coordinates a divalent metal cation. An a divalent metal cation-binding site is contributed by Glu291. ATP contacts are provided by Ile294 and Lys316. The interval 318-419 (KPLLDAEFIL…REPINVLEII (102 aa)) is OB domain.

This sequence belongs to the ATP-dependent DNA ligase family. It depends on a divalent metal cation as a cofactor.

It localises to the virion. It catalyses the reaction ATP + (deoxyribonucleotide)n-3'-hydroxyl + 5'-phospho-(deoxyribonucleotide)m = (deoxyribonucleotide)n+m + AMP + diphosphate.. In terms of biological role, very low-fidelity DNA ligase that seals nicks in double-stranded DNA during DNA repair. Together with the viral repair DNA polymerase X, fills the single nucleotide gaps generated by the AP endonuclease. It is not essential for viral replication and recombination. Displays a very low adenylation activity towards DNA with 3'-dideoxy- or 3'-amino-terminated nicks compared to regular nick DNA. The sequence is that of DNA ligase (LIG) from Ornithodoros (relapsing fever ticks).